The chain runs to 264 residues: MTPTTLSHLRKRKQEKHKFATITAYDASFARLFAEQGIDVMLVGDSLGMTLQGHDTTLSVTVADIAYHTRAVRAGAPACLLMADMPFMSYATPELACTNAAELMRAGANLVKMEGGAWLCDSVRMLTERAVPVCGHLGLMPQSVNIFGGYRVQGRDQDAADQLLSDALALEGAGAQMLVLECVPAQVAKTISEALRIPVIGIGAGRDTDGQILVMHDALGISSGHMPSFVKNFLAAEGDIRAAVRRYINDVEQGLFPADEHTFN.

2 residues coordinate Mg(2+): D45 and D84. Residues 45–46 (DS), D84, and K112 contribute to the 3-methyl-2-oxobutanoate site. E114 is a binding site for Mg(2+). The active-site Proton acceptor is E181.

It belongs to the PanB family. In terms of assembly, homodecamer; pentamer of dimers. The cofactor is Mg(2+).

It is found in the cytoplasm. The enzyme catalyses 3-methyl-2-oxobutanoate + (6R)-5,10-methylene-5,6,7,8-tetrahydrofolate + H2O = 2-dehydropantoate + (6S)-5,6,7,8-tetrahydrofolate. It functions in the pathway cofactor biosynthesis; (R)-pantothenate biosynthesis; (R)-pantoate from 3-methyl-2-oxobutanoate: step 1/2. In terms of biological role, catalyzes the reversible reaction in which hydroxymethyl group from 5,10-methylenetetrahydrofolate is transferred onto alpha-ketoisovalerate to form ketopantoate. The polypeptide is 3-methyl-2-oxobutanoate hydroxymethyltransferase (Edwardsiella ictaluri (strain 93-146)).